We begin with the raw amino-acid sequence, 330 residues long: Lipoyl synthase (330 aa).

The interval 1–31 (MSDAPIATSSEVTQSPADYDPTKKQKSAEKT) is disordered. Residues 7-16 (ATSSEVTQSP) are compositionally biased toward polar residues. A compositionally biased stretch (basic and acidic residues) spans 20–31 (DPTKKQKSAEKT). Positions 77, 82, 88, 103, 107, 110, and 317 each coordinate [4Fe-4S] cluster. One can recognise a Radical SAM core domain in the interval 88–306 (CFGKGTATFM…EEEAYKMGFT (219 aa)).

It belongs to the radical SAM superfamily. Lipoyl synthase family. [4Fe-4S] cluster serves as cofactor.

Its subcellular location is the cytoplasm. It catalyses the reaction [[Fe-S] cluster scaffold protein carrying a second [4Fe-4S](2+) cluster] + N(6)-octanoyl-L-lysyl-[protein] + 2 oxidized [2Fe-2S]-[ferredoxin] + 2 S-adenosyl-L-methionine + 4 H(+) = [[Fe-S] cluster scaffold protein] + N(6)-[(R)-dihydrolipoyl]-L-lysyl-[protein] + 4 Fe(3+) + 2 hydrogen sulfide + 2 5'-deoxyadenosine + 2 L-methionine + 2 reduced [2Fe-2S]-[ferredoxin]. The protein operates within protein modification; protein lipoylation via endogenous pathway; protein N(6)-(lipoyl)lysine from octanoyl-[acyl-carrier-protein]: step 2/2. Functionally, catalyzes the radical-mediated insertion of two sulfur atoms into the C-6 and C-8 positions of the octanoyl moiety bound to the lipoyl domains of lipoate-dependent enzymes, thereby converting the octanoylated domains into lipoylated derivatives. The polypeptide is Lipoyl synthase (Cupriavidus metallidurans (strain ATCC 43123 / DSM 2839 / NBRC 102507 / CH34) (Ralstonia metallidurans)).